The sequence spans 415 residues: Gamma-glutamyl phosphate reductase (415 aa).

This sequence belongs to the gamma-glutamyl phosphate reductase family.

Its subcellular location is the cytoplasm. It catalyses the reaction L-glutamate 5-semialdehyde + phosphate + NADP(+) = L-glutamyl 5-phosphate + NADPH + H(+). It participates in amino-acid biosynthesis; L-proline biosynthesis; L-glutamate 5-semialdehyde from L-glutamate: step 2/2. In terms of biological role, catalyzes the NADPH-dependent reduction of L-glutamate 5-phosphate into L-glutamate 5-semialdehyde and phosphate. The product spontaneously undergoes cyclization to form 1-pyrroline-5-carboxylate. The chain is Gamma-glutamyl phosphate reductase from Carboxydothermus hydrogenoformans (strain ATCC BAA-161 / DSM 6008 / Z-2901).